The sequence spans 693 residues: Kinesin-like protein KIFC1 (693 aa).

Disordered regions lie at residues 1–24 (MRGR…VRTT) and 48–156 (VKSS…KRPA). Low complexity-rich tracts occupy residues 49–59 (KSSSRLPLPGS) and 127–138 (QKPAPAAPAQKP). Residues Ser52 and Ser59 each carry the phosphoserine modification. The stretch at 165 to 334 (DLHEELKQYR…QELKGNIRVF (170 aa)) forms a coiled coil. The 354-residue stretch at 330–683 (NIRVFCRVRP…LRFASKVNQC (354 aa)) folds into the Kinesin motor domain. Thr379 bears the Phosphothreonine mark. ATP is bound at residue 430-437 (GQTGSGKT).

The protein belongs to the TRAFAC class myosin-kinesin ATPase superfamily. Kinesin family. NCD subfamily. As to quaternary structure, binds NUBP1 and NUBP2. Interacts with PPP1R42.

It is found in the nucleus. The protein resides in the cytoplasm. It localises to the cytoskeleton. Its subcellular location is the microtubule organizing center. The protein localises to the centrosome. It is found in the spindle. The protein resides in the early endosome. Functionally, minus end-directed microtubule-dependent motor required for bipolar spindle formation. May contribute to movement of early endocytic vesicles. Regulates cilium formation and structure. The polypeptide is Kinesin-like protein KIFC1 (Rattus norvegicus (Rat)).